The primary structure comprises 709 residues: METKDKKEKGHMVLNSDNVFGSVSSSPTTTIQNPNYFTSFENPNFPYIFPKEEYEVMSKIESGSGKSTGSGHDPVENTAIEQEPPAAKKKRYHRHTASQIQQMEALFKENAHPDTKTRLRLSKKLGLSPIQVKFWFQNKRTQIKAQQSRSDNAKLKAENETLKTESQNIQSNFQCLFCSTCGHNLRLENARLRQELDRLRSIVSMRNPSPSQEITPETNKNNNDNMLIAEEEKAIDMELAVSCARELAKMCDINEPLWNKKRLDNESVCLNEEEYKKMFLWPLMNDDDRFRREASRANAVIMLNCITLVKAFLDADKWSEMFFPIVSSAKTAQIISSGASGPSGTLLLMFAELQVVSPLVPTREAYFLRYVEQNAEEGKWMVVDFPIDRIKPASATTTDQYRRKPSGCIIQAMRNGYSQVTWVEHVEVEEKHVQDEVVREFVESGVAFGAERWLSVLKRQCERMASLMATNITDLGVIPSVEARKNLMKLSQRMVKTFCLNIINSHGQAPTKDTVKIVSRKVCGGLVPCAVSVTLLPYSHQQVFDLLRDNQRLSQLEILFMGSSFQEVAHIANGSHLGNSISLLRINVESNSSHNVELMLQETCTDNSGSLLVYSTVDPVAVQLAMNGEDPSEIPLLPVGFSVVPVNPSDGVEGSSVSSPSCLLTVAIQVLGSNVTTERLDLSTVSVINHRICATVNRITSALVNDVGN.

Residues 61 to 92 (ESGSGKSTGSGHDPVENTAIEQEPPAAKKKRY) form a disordered region. The homeobox DNA-binding region spans 88 to 147 (KKKRYHRHTASQIQQMEALFKENAHPDTKTRLRLSKKLGLSPIQVKFWFQNKRTQIKAQQ). The stretch at 137-205 (QNKRTQIKAQ…LDRLRSIVSM (69 aa)) forms a coiled coil. The region spanning 229-466 (AEEEKAIDME…LKRQCERMAS (238 aa)) is the START domain.

Belongs to the HD-ZIP homeobox family. Class IV subfamily. As to expression, expressed in flowers.

The protein localises to the nucleus. In terms of biological role, probable transcription factor. The protein is Homeobox-leucine zipper protein HDG4 of Arabidopsis thaliana (Mouse-ear cress).